The sequence spans 316 residues: BTB/POZ domain-containing adapter for CUL3-mediated RhoA degradation protein 2 (316 aa).

Residues 28-96 (KYVQLNVGGS…LRDDTVTLPQ (69 aa)) form the BTB domain. Polar residues predominate over residues 268-279 (EATSRSRSQASP). The tract at residues 268 to 287 (EATSRSRSQASPSEDEDTFE) is disordered. Ser278 is modified (phosphoserine). Phosphoserine; by CK2 is present on Ser280.

It belongs to the BACURD family. As to quaternary structure, component of the BCR(TNFAIP1) E3 ubiquitin ligase complex, at least composed of CUL3, TNFAIP1/BACURD2 and RBX1. Interacts with RHOA; with a preference for RhoA-GDP. Interacts with RHOB. Interacts with CSNK2B. Interacts with PCNA. Post-translationally, phosphorylation at Ser-280 by CK2 facilitates the nucleus localization and increases interaction with PCNA.

The protein localises to the cytoplasm. It is found in the nucleus. It localises to the endosome. It participates in protein modification; protein ubiquitination. In terms of biological role, substrate-specific adapter of a BCR (BTB-CUL3-RBX1) E3 ubiquitin-protein ligase complex involved in regulation of cytoskeleton structure. The BCR(TNFAIP1) E3 ubiquitin ligase complex mediates the ubiquitination of RHOA, leading to its degradation by the proteasome, thereby regulating the actin cytoskeleton and cell migration. Its interaction with RHOB may regulate apoptosis. May enhance the PCNA-dependent DNA polymerase delta activity. The polypeptide is BTB/POZ domain-containing adapter for CUL3-mediated RhoA degradation protein 2 (Tnfaip1) (Rattus norvegicus (Rat)).